We begin with the raw amino-acid sequence, 646 residues long: Heat shock 70 kDa protein (646 aa).

The segment covering 613-632 (GGAPGGMPGAAPGGFPGGAP) has biased composition (gly residues). Residues 613–646 (GGAPGGMPGAAPGGFPGGAPGSNDNEGPTVEEVD) form a disordered region.

The protein belongs to the heat shock protein 70 family.

In Neurospora crassa (strain ATCC 24698 / 74-OR23-1A / CBS 708.71 / DSM 1257 / FGSC 987), this protein is Heat shock 70 kDa protein (hsps-1).